The sequence spans 949 residues: Piwi-like protein 2 (949 aa).

The segment at 1 to 125 (MDPTRPPFRG…SLSTRVQQAS (125 aa)) is disordered. The span at 115 to 125 (PSLSTRVQQAS) shows a compositional bias: polar residues. A PAZ domain is found at 366 to 478 (SVLDIMNILY…LLPELAFMTG (113 aa)). The 292-residue stretch at 644-935 (LLVCLISGTR…LAFLSGQFLH (292 aa)) folds into the Piwi domain. Residues D721, E759, D791, and H924 contribute to the active site.

Belongs to the argonaute family. Piwi subfamily. In terms of assembly, component of the PET complex. Mg(2+) serves as cofactor. Post-translationally, methylated on arginine residues; required for the interaction with Tudor domain-containing protein and subsequent localization to the meiotic nuage, also named P granule. As to expression, expressed in oocytes, testis and liver (at protein level).

The protein localises to the cytoplasm. It is found in the nucleus. Endoribonuclease that plays a central role during spermatogenesis by repressing transposable elements and preventing their mobilization, which is essential for the germline integrity. Plays an essential role in meiotic differentiation of spermatocytes, germ cell differentiation and in self-renewal of spermatogonial stem cells. Acts via the piRNA metabolic process, which mediates the repression of transposable elements during meiosis by forming complexes composed of piRNAs and Piwi proteins and govern the methylation and subsequent repression of transposons. During piRNA biosynthesis, plays a key role in the piRNA amplification loop, also named ping-pong amplification cycle, by acting as a 'slicer-competent' piRNA endoribonuclease that cleaves primary piRNAs, which are then loaded onto 'slicer-incompetent' piwil4. Piwil2 slicing produces a pre-miRNA intermediate, which is then processed in mature piRNAs, and as well as a 16 nucleotide by-product that is degraded. Required for piwil4/miwi2 nuclear localization and association with secondary piRNAs antisense. Represses circadian rhythms by promoting the stability and activity of core clock components BMAL1 and CLOCK. This Xenopus tropicalis (Western clawed frog) protein is Piwi-like protein 2 (piwil2).